The primary structure comprises 150 residues: Arginine repressor (150 aa).

The protein belongs to the ArgR family.

Its subcellular location is the cytoplasm. It participates in amino-acid biosynthesis; L-arginine biosynthesis [regulation]. Its function is as follows. Regulates arginine biosynthesis genes. The protein is Arginine repressor of Clostridium acetobutylicum (strain ATCC 824 / DSM 792 / JCM 1419 / IAM 19013 / LMG 5710 / NBRC 13948 / NRRL B-527 / VKM B-1787 / 2291 / W).